Reading from the N-terminus, the 1319-residue chain is Protein Jumonji (1319 aa).

A compositionally biased stretch (basic residues) spans 1 to 11 (MSKERPKRNII). 7 disordered regions span residues 1–23 (MSKE…GMPW), 50–130 (DGID…PSLP), 173–265 (DEED…NTNG), 351–382 (YSNN…QSIN), 396–478 (HKMT…KALN), 499–537 (PIQK…PKRA), and 549–599 (QQRA…RSRA). The segment covering 61–70 (ASLSNGQLNG) has biased composition (polar residues). Positions 74-88 (GHKEDGSRSQRKDGG) are enriched in basic and acidic residues. A Nuclear localization signal motif is present at residues 96-102 (PAKKRPR). Over residues 98-107 (KKRPRLHAQR) the composition is skewed to basic residues. Over residues 109–121 (FAQSQPNSPSNTP) the composition is skewed to polar residues. A compositionally biased stretch (acidic residues) spans 173–185 (DEEDLEDEDEIEE). Residues 191–200 (VASTSCQSTP) are compositionally biased toward polar residues. The segment covering 221–251 (KDKELTPRSKARESSVGRDRSERCDESEISH) has biased composition (basic and acidic residues). The segment covering 372–382 (LSHSGKAQSIN) has biased composition (polar residues). Positions 413-424 (SAREEEVVDRPV) are enriched in basic and acidic residues. The segment covering 505-515 (PAPPPSPPAAP) has biased composition (pro residues). 2 stretches are compositionally biased toward low complexity: residues 516-525 (ASPSMPQNPA) and 554-570 (TNPT…ASKS). The span at 583–598 (RLDRDRERERERERSR) shows a compositional bias: basic and acidic residues. The 42-residue stretch at 607–648 (VPIFKPSSREFQDPLVYLDSFREQVESCGLCRVLPPTDWRPE) folds into the JmjN domain. The ARID domain maps to 671–779 (WGPNVQKLAC…FLLSYDLLSP (109 aa)). Positions 798–811 (RKRGPLEGHSDNGH) are enriched in basic and acidic residues. The segment at 798-818 (RKRGPLEGHSDNGHHSLALPR) is disordered. Residues 944–948 (GSGFP) carry the GSGFP motif motif. A JmjC domain is found at 954 to 1118 (PFSKHGWNLT…LGYEAAKDLK (165 aa)).

Belongs to the JARID2 family. Associates with the PRC2 complex.

The protein resides in the nucleus. Its function is as follows. Regulator of histone methyltransferase complexes that plays an essential role in embryonic development. Acts by modulating histone methyltransferase activity and promoting the recruitment of histone methyltransferase complexes to their target genes. Binds DNA and mediates the recruitment of the PRC2 complex to target genes in embryonic stem cells. Does not have histone demethylase activity but regulates activity of various histone methyltransferase complexes. In embryonic stem cells, it associates with the PRC2 complex and inhibits trimethylation of 'Lys-27' of histone H3 (H3K27me3) by the PRC2 complex, thereby playing a key role in differentiation of embryonic stem cells and normal development. The chain is Protein Jumonji (jarid2b) from Danio rerio (Zebrafish).